Here is a 319-residue protein sequence, read N- to C-terminus: Coproporphyrin III ferrochelatase 2 (319 aa).

Fe-coproporphyrin III contacts are provided by residues Tyr13, Arg30, 46-47, Ser54, and Tyr125; that span reads RY. Fe(2+)-binding residues include His181 and Glu262.

Belongs to the ferrochelatase family.

It is found in the cytoplasm. It carries out the reaction Fe-coproporphyrin III + 2 H(+) = coproporphyrin III + Fe(2+). It participates in porphyrin-containing compound metabolism; protoheme biosynthesis. Involved in coproporphyrin-dependent heme b biosynthesis. Catalyzes the insertion of ferrous iron into coproporphyrin III to form Fe-coproporphyrin III. This Bacillus thuringiensis subsp. konkukian (strain 97-27) protein is Coproporphyrin III ferrochelatase 2.